Consider the following 257-residue polypeptide: Histidine/lysine/arginine/ornithine transport ATP-binding protein HisP (257 aa).

An ABC transporter domain is found at 6–252 (LNVIDLHKRY…PQSPRLQRFL (247 aa)). ATP-binding residues include serine 40, glycine 41, glycine 43, lysine 44, serine 45, and threonine 46.

The protein belongs to the ABC transporter superfamily. As to quaternary structure, the HisPMQJ complex is composed of two ATP-binding proteins (HisP), two transmembrane proteins (HisM and HisQ) and a solute-binding protein (HisJ). The HisPMQ-ArgT complex is composed of two ATP-binding proteins (HisP), two transmembrane proteins (HisM and HisQ) and a solute-binding protein (ArgT).

It localises to the cell inner membrane. It catalyses the reaction a polar amino acid(out) + ATP + H2O = a polar amino acid(in) + ADP + phosphate + H(+). The catalysed reaction is L-histidine(out) + ATP + H2O = L-histidine(in) + ADP + phosphate + H(+). The enzyme catalyses L-lysine(out) + ATP + H2O = L-lysine(in) + ADP + phosphate + H(+). It carries out the reaction L-arginine(out) + ATP + H2O = L-arginine(in) + ADP + phosphate + H(+). It catalyses the reaction L-ornithine(out) + ATP + H2O = L-ornithine(in) + ADP + phosphate + H(+). Functionally, part of the ABC transporter complex HisPMQJ involved in histidine transport. Is also part of the ABC transporter complex HisPMQ-ArgT involved in lysine/arginine/ornithine transport. Shows ATPase activity. Responsible for energy coupling to the transport system. The chain is Histidine/lysine/arginine/ornithine transport ATP-binding protein HisP from Escherichia coli (strain K12).